Consider the following 142-residue polypeptide: Large ribosomal subunit protein uL13 (142 aa).

The protein belongs to the universal ribosomal protein uL13 family. Part of the 50S ribosomal subunit.

Functionally, this protein is one of the early assembly proteins of the 50S ribosomal subunit, although it is not seen to bind rRNA by itself. It is important during the early stages of 50S assembly. The polypeptide is Large ribosomal subunit protein uL13 (Shigella dysenteriae serotype 1 (strain Sd197)).